The primary structure comprises 398 residues: 1-deoxy-D-xylulose 5-phosphate reductoisomerase (398 aa).

Positions 11, 12, 13, 14, 38, 39, and 125 each coordinate NADPH. K126 contacts 1-deoxy-D-xylulose 5-phosphate. Residue E127 participates in NADPH binding. D151 serves as a coordination point for Mn(2+). 1-deoxy-D-xylulose 5-phosphate is bound by residues S152, E153, S179, and H202. E153 contacts Mn(2+). G208 lines the NADPH pocket. The 1-deoxy-D-xylulose 5-phosphate site is built by S215, N220, K221, and E224. E224 is a Mn(2+) binding site.

Belongs to the DXR family. Mg(2+) is required as a cofactor. It depends on Mn(2+) as a cofactor.

It catalyses the reaction 2-C-methyl-D-erythritol 4-phosphate + NADP(+) = 1-deoxy-D-xylulose 5-phosphate + NADPH + H(+). It functions in the pathway isoprenoid biosynthesis; isopentenyl diphosphate biosynthesis via DXP pathway; isopentenyl diphosphate from 1-deoxy-D-xylulose 5-phosphate: step 1/6. Catalyzes the NADPH-dependent rearrangement and reduction of 1-deoxy-D-xylulose-5-phosphate (DXP) to 2-C-methyl-D-erythritol 4-phosphate (MEP). The chain is 1-deoxy-D-xylulose 5-phosphate reductoisomerase from Burkholderia pseudomallei (strain 1106a).